Consider the following 86-residue polypeptide: Large ribosomal subunit protein bL27 (86 aa).

Residues 1–26 form a disordered region; it reads MATKKAGGSSRNGRDSAGRRLGVKKS.

It belongs to the bacterial ribosomal protein bL27 family.

In Rickettsia prowazekii (strain Madrid E), this protein is Large ribosomal subunit protein bL27.